The primary structure comprises 329 residues: uncharacterized protein (329 aa).

One can recognise a Nudix hydrolase domain in the interval 27–185; it reads PRRASVAVII…IQIDSSRALK (159 aa). 3 consecutive transmembrane segments (helical) span residues 123–143, 227–247, and 303–323; these read VITS…VFIL, PFLR…LSPS, and LTLL…FLII.

It localises to the membrane. This is an uncharacterized protein from Schizosaccharomyces pombe (strain 972 / ATCC 24843) (Fission yeast).